Consider the following 488-residue polypeptide: Inosine-5'-monophosphate dehydrogenase (488 aa).

2 CBS domains span residues 95-153 and 157-214; these read VITN…SMKI and MTKE…PNSS. NAD(+)-binding positions include Asp251 and 301–303; that span reads GIG. K(+) is bound by residues Gly303 and Gly305. Ser306 contacts IMP. K(+) is bound at residue Cys308. Cys308 functions as the Thioimidate intermediate in the catalytic mechanism. IMP is bound by residues 341-343, 364-365, and 388-392; these read DGG, GS, and YRGMG. The Proton acceptor role is filled by Arg404. Glu416 is an IMP binding site. K(+) contacts are provided by Glu470, Ser471, and His472.

The protein belongs to the IMPDH/GMPR family. As to quaternary structure, homotetramer. It depends on K(+) as a cofactor.

The enzyme catalyses IMP + NAD(+) + H2O = XMP + NADH + H(+). It participates in purine metabolism; XMP biosynthesis via de novo pathway; XMP from IMP: step 1/1. Mycophenolic acid (MPA) is a non-competitive inhibitor that prevents formation of the closed enzyme conformation by binding to the same site as the amobile flap. In contrast, mizoribine monophosphate (MZP) is a competitive inhibitor that induces the closed conformation. MPA is a potent inhibitor of mammalian IMPDHs but a poor inhibitor of the bacterial enzymes. MZP is a more potent inhibitor of bacterial IMPDH. Its function is as follows. Catalyzes the conversion of inosine 5'-phosphate (IMP) to xanthosine 5'-phosphate (XMP), the first committed and rate-limiting step in the de novo synthesis of guanine nucleotides, and therefore plays an important role in the regulation of cell growth. In Bacillus subtilis (strain 168), this protein is Inosine-5'-monophosphate dehydrogenase.